The following is a 241-amino-acid chain: Major microneme antigen (241 aa).

A signal peptide spans 1–34 (MTLPIHFPRCVLYGMASAVWSILFLHILVGDTMS). Positions 35–103 (AADALSWSGG…ATGRGPSFVH (69 aa)) are excised as a propeptide. Residues 64 to 83 (GKELEQQHGGEEQQMQRDTK) are compositionally biased toward basic and acidic residues. The interval 64 to 90 (GKELEQQHGGEEQQMQRDTKPAAFSNP) is disordered. 2 PAN domains span residues 112-181 (CFPH…PRSC) and 185-241 (CTDN…VERA). 6 disulfides stabilise this stretch: Cys-112/Cys-181, Cys-137/Cys-159, Cys-141/Cys-147, Cys-185/Cys-189, Cys-210/Cys-230, and Cys-214/Cys-220. Ser-121 is an a carbohydrate binding site. A carbohydrate-binding residues include Lys-162, Tyr-169, and Asp-174.

It belongs to the microneme antigen family. Homodimer or heterodimer of major microneme antigen and microneme antigen. Post-translationally, contains six disulfide bonds.

It is found in the cytoplasmic vesicle. The protein resides in the secretory vesicle. Its subcellular location is the microneme. Galactose-binding lectin. Plays a role in adhesion to the host cell. Has a potential role in invasion of host cells. The chain is Major microneme antigen from Sarcocystis muris.